A 141-amino-acid polypeptide reads, in one-letter code: ATP synthase epsilon chain (141 aa).

It belongs to the ATPase epsilon chain family. As to quaternary structure, F-type ATPases have 2 components, CF(1) - the catalytic core - and CF(0) - the membrane proton channel. CF(1) has five subunits: alpha(3), beta(3), gamma(1), delta(1), epsilon(1). CF(0) has three main subunits: a, b and c.

It localises to the cell inner membrane. In terms of biological role, produces ATP from ADP in the presence of a proton gradient across the membrane. This Burkholderia cenocepacia (strain ATCC BAA-245 / DSM 16553 / LMG 16656 / NCTC 13227 / J2315 / CF5610) (Burkholderia cepacia (strain J2315)) protein is ATP synthase epsilon chain.